Consider the following 123-residue polypeptide: Ig heavy chain V region HPCG14 (123 aa).

The 114-residue stretch at 1-114 folds into the Ig-like domain; the sequence is EVKLVESGGG…GYDYWFDVWG (114 aa).

The protein is Ig heavy chain V region HPCG14 of Mus musculus (Mouse).